Here is a 219-residue protein sequence, read N- to C-terminus: Protein YNG1 (219 aa).

Residues glutamate 155–glutamate 204 form a PHD-type; degenerate zinc finger. Positions 158, 160, 171, 176, 182, 185, 198, and 202 each coordinate Zn(2+).

This sequence belongs to the ING family. In terms of assembly, component of the NuA3 histone acetyltransferase (HAT) complex. The NuA3 HAT complex has 2 functionally distinct forms that participate in transcription. The NuA3a HAT complex is composed of at least NTO1, SAS3, TAF14, YNG1 and EAF6. The NuA3b HAT complex contains an additional subunit, PDP3. Interacts with H3K4me3 and to a lesser extent with H3K4me2.

The protein localises to the nucleus. Functionally, histone-binding component of the NuA3a histone acetyltransferase complex. Targets the NuA3a HAT complex via histone H3K4me3 to facilitate transcription initiation at promoter regions. SAS3 then acetylates H3K14, leading to transcription initiation at a subset of genes. YNG1 is required for the HAT activity of NuA3 but not for its integrity. Mediates the interaction of SAS3 with nucleosomes. The protein is Protein YNG1 (YNG1) of Saccharomyces cerevisiae (strain ATCC 204508 / S288c) (Baker's yeast).